The sequence spans 203 residues: Glycerol-3-phosphate acyltransferase (203 aa).

The next 5 helical transmembrane spans lie at 4–24, 56–76, 80–100, 112–132, and 138–158; these read IAPG…AILV, VAVL…AYML, PFWL…PVFF, FGAI…TWLL, and GYSS…VWWF.

It belongs to the PlsY family. Probably interacts with PlsX.

It is found in the cell inner membrane. It carries out the reaction an acyl phosphate + sn-glycerol 3-phosphate = a 1-acyl-sn-glycero-3-phosphate + phosphate. It participates in lipid metabolism; phospholipid metabolism. Its function is as follows. Catalyzes the transfer of an acyl group from acyl-phosphate (acyl-PO(4)) to glycerol-3-phosphate (G3P) to form lysophosphatidic acid (LPA). This enzyme utilizes acyl-phosphate as fatty acyl donor, but not acyl-CoA or acyl-ACP. This is Glycerol-3-phosphate acyltransferase from Enterobacter sp. (strain 638).